Reading from the N-terminus, the 290-residue chain is MDKIIKTISESGAFRAFVLDSTETVRTAQEKHQTQASSTVALGRTLIASQILAANEKGNTKLTVKVLGSSSLGAIITVADTKGNVKGYVQNPGVDIKKTATGEVLVGPFVGNGQFLVITDYGTGNPYNSITPLISGEIGEDLAFYLTESQQTPSAVGLNVLLDEEDKVKIAGGFLVQVLPGAKKEEIARFEKRIQEMPAISTLLESDDHIEALLKAIYGDEAYKRLSEEEIRFQCDCSHERFMNALASLPSSDLQEMKEEDHGAEITCQFCQTTYNFDEKDLEELIRDKS.

2 disulfides stabilise this stretch: Cys235–Cys237 and Cys268–Cys271.

This sequence belongs to the HSP33 family. Under oxidizing conditions two disulfide bonds are formed involving the reactive cysteines. Under reducing conditions zinc is bound to the reactive cysteines and the protein is inactive.

It is found in the cytoplasm. Functionally, redox regulated molecular chaperone. Protects both thermally unfolding and oxidatively damaged proteins from irreversible aggregation. Plays an important role in the bacterial defense system toward oxidative stress. In Streptococcus pneumoniae (strain CGSP14), this protein is 33 kDa chaperonin.